We begin with the raw amino-acid sequence, 553 residues long: Putative transport protein KPN78578_40470 (553 aa).

5 helical membrane-spanning segments follow: residues 4–24 (IALTVSVLALVAVVGLWIGNV), 28–48 (GVGFGIGGVLFGGIIVGHFVD), 65–85 (FGLILFVYTIGIQVGPGFFAS), 95–115 (LFAILIVILGGLVTAVLHKLF), and 158–178 (MSYAMAYPFGICGILLTMWLV). RCK C-terminal domains follow at residues 192 to 276 (RFEE…VIGQ) and 279 to 361 (ATSL…ELGN). 6 helical membrane-spanning segments follow: residues 371–391 (MLPVFIGIGLGVLLGSIPLFI), 403–425 (AGGPLIMALILGRIGSIGKLYWF), 437–457 (LGIVLFLAVVGLKSGGDFVAT), 464–484 (LSWIAYGIFITAIPLLTVGVL), 493–513 (YLTLCGMLAGSMTDPPALAFA), and 532–552 (PLVMFLRIITPQLLAVLFWGL).

The protein belongs to the AAE transporter (TC 2.A.81) family. YidE subfamily.

Its subcellular location is the cell membrane. This is Putative transport protein KPN78578_40470 from Klebsiella pneumoniae subsp. pneumoniae (strain ATCC 700721 / MGH 78578).